A 441-amino-acid chain; its full sequence is Diuretic hormone receptor (441 aa).

N99, N107, and N112 each carry an N-linked (GlcNAc...) asparagine glycan. Residues 135-158 (FVFFVGFCLSLVAIAVAIWIFLYF) form a helical membrane-spanning segment. The Cytoplasmic portion of the chain corresponds to 159–166 (KDLRCLRN). The helical transmembrane segment at 167-187 (TIHTNLMATYICNDATWIISA) threads the bilayer. At 188–194 (VVQEYVE) the chain is on the extracellular side. The chain crosses the membrane as a helical span at residues 195 to 224 (NGGLCSVLAVLMHYFYLTNFFWMFVEGLYL). Topologically, residues 225-238 (FLLVVATFTGEKVK) are cytoplasmic. Residues 239–260 (LQIYIIIGWGIPGVIVVTWAII) form a helical membrane-spanning segment. Residues 261–291 (KHLGKTAPDNAGESHPMVLLIKHCPWMAEDY) lie on the Extracellular side of the membrane. A helical transmembrane segment spans residues 292-315 (FDWIHQAPVITVLAVNLVFLFSIM). Topologically, residues 316–338 (WVLITKLQSANTAETQQYRKATK) are cytoplasmic. A helical transmembrane segment spans residues 339–357 (ALLVLFPLLGITYILMMQG). Residues 358–371 (PMDGVAGHVFRNAQ) lie on the Extracellular side of the membrane. Residues 372 to 391 (ALLLSLQGFTVALFYCFLNT) form a helical membrane-spanning segment. Over 392-441 (EVQNTLRHRMSRWRETRTVGGGRRYTLSGHSKDWSPRSRTESIRCLQHRS) the chain is Cytoplasmic.

This sequence belongs to the G-protein coupled receptor 2 family. As to expression, expressed in Malpighian tubules.

The protein resides in the cell membrane. Receptor for the insect diurectic hormone. The activity of this receptor is mediated by G proteins which activate adenylyl cyclase. The sequence is that of Diuretic hormone receptor from Acheta domesticus (House cricket).